The following is a 415-amino-acid chain: Tyrosine--tRNA ligase (415 aa).

Tyr34 is an L-tyrosine binding site. Residues 39-48 (PSAKSIHLGN) carry the 'HIGH' region motif. 2 residues coordinate L-tyrosine: Tyr163 and Gln167. The 'KMSKS' region motif lies at 225–229 (KFGKS). Lys228 is a binding site for ATP. The S4 RNA-binding domain occupies 349–414 (EKIIDILDRA…GKKKIFIIKK (66 aa)).

This sequence belongs to the class-I aminoacyl-tRNA synthetase family. TyrS type 1 subfamily. Homodimer.

The protein resides in the cytoplasm. The enzyme catalyses tRNA(Tyr) + L-tyrosine + ATP = L-tyrosyl-tRNA(Tyr) + AMP + diphosphate + H(+). Functionally, catalyzes the attachment of tyrosine to tRNA(Tyr) in a two-step reaction: tyrosine is first activated by ATP to form Tyr-AMP and then transferred to the acceptor end of tRNA(Tyr). This Mycoplasma mobile (strain ATCC 43663 / 163K / NCTC 11711) (Mesomycoplasma mobile) protein is Tyrosine--tRNA ligase.